Consider the following 88-residue polypeptide: Small ribosomal subunit protein uS12 (88 aa).

The disordered stretch occupies residues 1–24 (RKGRRDKIGKVKTAALKGSPQRRG). D81 carries the post-translational modification 3-methylthioaspartic acid.

Belongs to the universal ribosomal protein uS12 family. Part of the 30S ribosomal subunit. Contacts proteins S8 and S17. May interact with IF1 in the 30S initiation complex.

In terms of biological role, with S4 and S5 plays an important role in translational accuracy. Functionally, interacts with and stabilizes bases of the 16S rRNA that are involved in tRNA selection in the A site and with the mRNA backbone. Located at the interface of the 30S and 50S subunits, it traverses the body of the 30S subunit contacting proteins on the other side and probably holding the rRNA structure together. The combined cluster of proteins S8, S12 and S17 appears to hold together the shoulder and platform of the 30S subunit. This is Small ribosomal subunit protein uS12 (rpsL) from Mycobacterium szulgai.